The sequence spans 763 residues: Phosphoglycerol transferase I (763 aa).

The next 4 helical transmembrane spans lie at Met-1–Ala-21, Trp-26–Phe-46, Ile-77–Ile-97, and Phe-108–Phe-128.

The protein belongs to the OpgB family.

The protein localises to the cell inner membrane. It carries out the reaction a phosphatidylglycerol + a membrane-derived-oligosaccharide D-glucose = a 1,2-diacyl-sn-glycerol + a membrane-derived-oligosaccharide 6-(glycerophospho)-D-glucose.. It participates in glycan metabolism; osmoregulated periplasmic glucan (OPG) biosynthesis. Its function is as follows. Transfers a phosphoglycerol residue from phosphatidylglycerol to the membrane-bound nascent glucan backbones. The sequence is that of Phosphoglycerol transferase I from Escherichia coli O127:H6 (strain E2348/69 / EPEC).